The chain runs to 376 residues: MSTVGKVIKCKAAVLWEANKPFSLEEVEVAPPKAHEVRIKIVATGICRSDDHVVTGALAMPFPIILGHEAAGVIESVGEKVTSLKPGDAVIPLFVPQCGECRSCLSTKGNLCIKNDLSSSPTGLMADGTTRFTCKGKAIHHFVGTSTFTEYTVVHETAAAKIDSAAPLEKVCLIGCGFSTGYGAVLQTAKVEAGSTCAVFGLGGVGLSVVMGCKAAGASRIIAVDINKDKFAKAKELGATECINPKDFKKPIHEVLTEMTGQGVDYSFEVIGRIETMTAALASCHNNYGVSVIVGVPPAAQKISFDPMLIFSGRTWKGSVFGGWKSKDAVPKLVADYMKKKFVLDPLITHTLPFTKINEGFDLLRTGKSIRSVLVL.

Serine 2 is subject to N-acetylserine. Zn(2+)-binding residues include cysteine 47, histidine 68, cysteine 98, cysteine 101, cysteine 104, cysteine 112, and cysteine 176. NAD(+) is bound by residues 201–206 (GLGGVG), aspartate 225, lysine 230, 294–296 (VGV), and arginine 371.

Belongs to the zinc-containing alcohol dehydrogenase family. Class-I subfamily. As to quaternary structure, homodimer. Zn(2+) is required as a cofactor.

Its subcellular location is the cytoplasm. The enzyme catalyses a primary alcohol + NAD(+) = an aldehyde + NADH + H(+). It catalyses the reaction a secondary alcohol + NAD(+) = a ketone + NADH + H(+). This chain is Alcohol dehydrogenase 1 (ADH1), found in Gallus gallus (Chicken).